Reading from the N-terminus, the 229-residue chain is Ribonuclease HII (229 aa).

The 190-residue stretch at 34 to 223 (WPVAGADEAG…LRKSEDGPEM (190 aa)) folds into the RNase H type-2 domain. Residues D40, E41, and D131 each coordinate a divalent metal cation. The interval 209-229 (MSFRPLRKSEDGPEMDELIPE) is disordered. Acidic residues predominate over residues 220 to 229 (GPEMDELIPE).

The protein belongs to the RNase HII family. The cofactor is Mn(2+). Mg(2+) is required as a cofactor.

It is found in the cytoplasm. It carries out the reaction Endonucleolytic cleavage to 5'-phosphomonoester.. Functionally, endonuclease that specifically degrades the RNA of RNA-DNA hybrids. The protein is Ribonuclease HII of Rhizobium etli (strain CIAT 652).